The following is a 279-amino-acid chain: Uroplakin-3b (279 aa).

A signal peptide spans 1 to 26 (MGLPSRQPRLWLLLLVVLGWPQPCLT). The Lumenal portion of the chain corresponds to 27–200 (LDLIPYTPRI…DTWPGRRSGD (174 aa)). Asparagine 77 carries N-linked (GlcNAc...) asparagine glycosylation. A helical membrane pass occupies residues 201–221 (MIIITSILSSLAGLLLLAFLA). Over 222–279 (ASSVRFSSLWWPEEAPEQLRIGSFMGKRYMTHHIPPSEAATLPVGCEPGLERFPSLSP) the chain is Cytoplasmic.

The protein belongs to the uroplakin-3 family. Heterodimer with uroplakin-1B (UPK1B). As to expression, expression is urothelium-specific.

Its subcellular location is the cell membrane. Component of the asymmetric unit membrane (AUM); a highly specialized biomembrane elaborated by terminally differentiated urothelial cells. May play an important role in AUM-cytoskeleton interaction in terminally differentiated urothelial cells. It also contributes to the formation of urothelial glycocalyx which may play an important role in preventing bacterial adherence. This is Uroplakin-3b (UPK3B) from Bos taurus (Bovine).